The sequence spans 100 residues: NADH-quinone oxidoreductase subunit K (100 aa).

3 helical membrane-spanning segments follow: residues 4 to 24 (YEYYVALSGLLMVLGFIGVIV), 28 to 48 (IIAMLISTELMLNAVNVAFVA), and 60 to 80 (VFVFFILTIAAAEAAIGLGLI).

It belongs to the complex I subunit 4L family. In terms of assembly, NDH-1 is composed of 14 different subunits. Subunits NuoA, H, J, K, L, M, N constitute the membrane sector of the complex.

It is found in the cell inner membrane. It catalyses the reaction a quinone + NADH + 5 H(+)(in) = a quinol + NAD(+) + 4 H(+)(out). Its function is as follows. NDH-1 shuttles electrons from NADH, via FMN and iron-sulfur (Fe-S) centers, to quinones in the respiratory chain. The immediate electron acceptor for the enzyme in this species is believed to be ubiquinone. Couples the redox reaction to proton translocation (for every two electrons transferred, four hydrogen ions are translocated across the cytoplasmic membrane), and thus conserves the redox energy in a proton gradient. The chain is NADH-quinone oxidoreductase subunit K from Sulfurihydrogenibium azorense (strain DSM 15241 / OCM 825 / Az-Fu1).